A 313-amino-acid polypeptide reads, in one-letter code: MLKMESTQQMASSIINTSFEAAVVAATSTLELMGIQYDYNEVYTRVKSKFDYVMDDSGVKNNLLGKAATIDQALNGKFGSAVRNRNWMTDTRTTARLDEDVNKLRMMLSSKGIDQKMRVLNACFSVKRIPGKSSSIIKCTRLMRDKIERGEVEVDDSFVEEKMEVDTIDWKSRYEQLEKRFESLKQRVNEKYTSWVQKAKKVNENMYSLQNVISQQQSQIADLQHYCNKLEVDLQNKISSLVSSIEWYMKSMELPDEVKTDIEQQLNSIDVINPINAIDDFESLIRNVILDYDRTFLMFKGLMRQCNYEYTYE.

Residues 1 to 149 (MLKMESTQQM…TRLMRDKIER (149 aa)) are RNA-binding. The tract at residues 150–206 (GEVEVDDSFVEEKMEVDTIDWKSRYEQLEKRFESLKQRVNEKYTSWVQKAKKVNENM) is dimerization. A coiled-coil region spans residues 166-237 (DTIDWKSRYE…NKLEVDLQNK (72 aa)). The interaction with host ZC3H7B stretch occupies residues 170 to 234 (WKSRYEQLEK…HYCNKLEVDL (65 aa)). An interaction with host EIF4G1 region spans residues 208–313 (SLQNVISQQQ…RQCNYEYTYE (106 aa)).

This sequence belongs to the rotavirus NSP3 family. As to quaternary structure, homodimer. Interacts (via the coiled-coil region) with host ZC3H7B (via LD motif). Interacts with host EIF4G1.

It localises to the host cytoplasm. Plays an important role in stimulating the translation of viral mRNAs. These mRNAs are capped but not polyadenylated, instead terminating in a conserved sequence 'GACC' at the 3' that is recognized by NSP3, which competes with host PABPC1 for EIF4G1 binding. The interaction between NSP3 and host EIF4G1 stabilizes the EIF4E-EIF4G1 interaction, thereby facilitating the initiation of capped mRNA translation. This chain is Non-structural protein 3, found in Rotavirus A (isolate RVA/Human/Belgium/B4106/2000/G3P11[14]) (RV-A).